A 97-amino-acid polypeptide reads, in one-letter code: C-C motif chemokine 8 (97 aa).

An N-terminal signal peptide occupies residues M1 to T23. 2 cysteine pairs are disulfide-bonded: C32/C57 and C33/C73.

The protein belongs to the intercrine beta (chemokine CC) family. In terms of assembly, monomer or homodimer; in equilibrium.

It localises to the secreted. Chemotactic factor that attracts monocytes. This protein can bind heparin. The polypeptide is C-C motif chemokine 8 (Ccl8) (Mus musculus (Mouse)).